A 100-amino-acid polypeptide reads, in one-letter code: Urease subunit gamma (100 aa).

It belongs to the urease gamma subunit family. In terms of assembly, heterotrimer of UreA (gamma), UreB (beta) and UreC (alpha) subunits. Three heterotrimers associate to form the active enzyme.

Its subcellular location is the cytoplasm. The catalysed reaction is urea + 2 H2O + H(+) = hydrogencarbonate + 2 NH4(+). Its pathway is nitrogen metabolism; urea degradation; CO(2) and NH(3) from urea (urease route): step 1/1. The protein is Urease subunit gamma of Pseudomonas aeruginosa (strain LESB58).